The primary structure comprises 78 residues: Exodeoxyribonuclease 7 small subunit (78 aa).

The protein belongs to the XseB family. In terms of assembly, heterooligomer composed of large and small subunits.

The protein localises to the cytoplasm. The catalysed reaction is Exonucleolytic cleavage in either 5'- to 3'- or 3'- to 5'-direction to yield nucleoside 5'-phosphates.. Functionally, bidirectionally degrades single-stranded DNA into large acid-insoluble oligonucleotides, which are then degraded further into small acid-soluble oligonucleotides. This Cutibacterium acnes (strain DSM 16379 / KPA171202) (Propionibacterium acnes) protein is Exodeoxyribonuclease 7 small subunit.